A 314-amino-acid polypeptide reads, in one-letter code: Malate dehydrogenase (314 aa).

Residues 12–17 (GSGFTG) and Asp36 contribute to the NAD(+) site. Arg87 and Arg93 together coordinate substrate. NAD(+) is bound by residues Asn100 and 123–125 (LTN). Asn125 provides a ligand contact to substrate. Ser149 bears the Phosphoserine mark. Arg156 is a binding site for substrate. His180 (proton acceptor) is an active-site residue.

It belongs to the LDH/MDH superfamily. MDH type 3 family.

The enzyme catalyses (S)-malate + NAD(+) = oxaloacetate + NADH + H(+). Catalyzes the reversible oxidation of malate to oxaloacetate. The polypeptide is Malate dehydrogenase (Shouchella clausii (strain KSM-K16) (Alkalihalobacillus clausii)).